A 130-amino-acid chain; its full sequence is Small ribosomal subunit protein uS8 (130 aa).

Belongs to the universal ribosomal protein uS8 family. In terms of assembly, part of the 30S ribosomal subunit. Contacts proteins S5 and S12.

One of the primary rRNA binding proteins, it binds directly to 16S rRNA central domain where it helps coordinate assembly of the platform of the 30S subunit. The protein is Small ribosomal subunit protein uS8 of Photobacterium profundum (strain SS9).